The chain runs to 160 residues: 6,7-dimethyl-8-ribityllumazine synthase (160 aa).

5-amino-6-(D-ribitylamino)uracil contacts are provided by residues tryptophan 27, 59–61 (AIE), and 81–83 (VVI). 86–87 (QT) lines the (2S)-2-hydroxy-3-oxobutyl phosphate pocket. Histidine 89 acts as the Proton donor in catalysis. Residue asparagine 114 coordinates 5-amino-6-(D-ribitylamino)uracil. Arginine 128 contacts (2S)-2-hydroxy-3-oxobutyl phosphate.

The protein belongs to the DMRL synthase family. Homopentamer.

The catalysed reaction is (2S)-2-hydroxy-3-oxobutyl phosphate + 5-amino-6-(D-ribitylamino)uracil = 6,7-dimethyl-8-(1-D-ribityl)lumazine + phosphate + 2 H2O + H(+). It functions in the pathway cofactor biosynthesis; riboflavin biosynthesis; riboflavin from 2-hydroxy-3-oxobutyl phosphate and 5-amino-6-(D-ribitylamino)uracil: step 1/2. Catalyzes the formation of 6,7-dimethyl-8-ribityllumazine by condensation of 5-amino-6-(D-ribitylamino)uracil with 3,4-dihydroxy-2-butanone 4-phosphate. This is the penultimate step in the biosynthesis of riboflavin. The polypeptide is 6,7-dimethyl-8-ribityllumazine synthase (Mycolicibacterium paratuberculosis (strain ATCC BAA-968 / K-10) (Mycobacterium paratuberculosis)).